The sequence spans 297 residues: N-acetylneuraminate lyase (297 aa).

Residues S47 and T48 each coordinate aceneuramate. Y137 (proton donor) is an active-site residue. The Schiff-base intermediate with substrate role is filled by K165. The aceneuramate site is built by T167, G189, D191, E192, and S208.

It belongs to the DapA family. NanA subfamily. As to quaternary structure, homotetramer.

The protein localises to the cytoplasm. It carries out the reaction aceneuramate = aldehydo-N-acetyl-D-mannosamine + pyruvate. It functions in the pathway amino-sugar metabolism; N-acetylneuraminate degradation; D-fructose 6-phosphate from N-acetylneuraminate: step 1/5. In terms of biological role, catalyzes the reversible aldol cleavage of N-acetylneuraminic acid (sialic acid; Neu5Ac) to form pyruvate and N-acetylmannosamine (ManNAc) via a Schiff base intermediate. In Citrobacter koseri (strain ATCC BAA-895 / CDC 4225-83 / SGSC4696), this protein is N-acetylneuraminate lyase.